Here is a 287-residue protein sequence, read N- to C-terminus: uncharacterized protein (287 aa).

GTP contacts are provided by residues 43-50 (GKTGAGKS), 90-93 (DLPG), and 156-159 (DKAE). The G domain occupies 48-140 (GKSSLCNALF…TDEHFYRQVI (93 aa)).

The protein to E.coli YkfA and YeeP.

This is an uncharacterized protein from Escherichia coli (strain K12).